The primary structure comprises 465 residues: Putative F-box/LRR-repeat protein At3g28410 (465 aa).

Positions 27–73 (ADFINYMPDDILHHILSFIPTDLAMRTSVLSRRWRHVWCETPCLDIK) constitute an F-box domain. 7 LRR repeats span residues 127 to 155 (VRDF…DVTL), 178 to 203 (FCQI…TLDT), 207 to 225 (LERL…DINR), 278 to 302 (ADRY…TVGE), 332 to 357 (FVRS…TLHT), 402 to 427 (TSKL…VVWL), and 447 to 465 (VETL…QSNC).

This is Putative F-box/LRR-repeat protein At3g28410 from Arabidopsis thaliana (Mouse-ear cress).